Consider the following 100-residue polypeptide: Small ribosomal subunit protein uS14c (100 aa).

Belongs to the universal ribosomal protein uS14 family. Part of the 30S ribosomal subunit.

It localises to the plastid. The protein resides in the chloroplast. In terms of biological role, binds 16S rRNA, required for the assembly of 30S particles. The protein is Small ribosomal subunit protein uS14c of Oltmannsiellopsis viridis (Marine flagellate).